Here is a 368-residue protein sequence, read N- to C-terminus: Probable dual-specificity RNA methyltransferase RlmN (368 aa).

Residue E100 is the Proton acceptor of the active site. Positions 106–344 (QHYGLSVCVT…CVVRQEHGTD (239 aa)) constitute a Radical SAM core domain. An intrachain disulfide couples C113 to C349. [4Fe-4S] cluster contacts are provided by C120, C124, and C127. S-adenosyl-L-methionine is bound by residues 172-173 (GE), S204, 227-229 (SLH), and N305. The active-site S-methylcysteine intermediate is the C349.

This sequence belongs to the radical SAM superfamily. RlmN family. The cofactor is [4Fe-4S] cluster.

It is found in the cytoplasm. It catalyses the reaction adenosine(2503) in 23S rRNA + 2 reduced [2Fe-2S]-[ferredoxin] + 2 S-adenosyl-L-methionine = 2-methyladenosine(2503) in 23S rRNA + 5'-deoxyadenosine + L-methionine + 2 oxidized [2Fe-2S]-[ferredoxin] + S-adenosyl-L-homocysteine. The catalysed reaction is adenosine(37) in tRNA + 2 reduced [2Fe-2S]-[ferredoxin] + 2 S-adenosyl-L-methionine = 2-methyladenosine(37) in tRNA + 5'-deoxyadenosine + L-methionine + 2 oxidized [2Fe-2S]-[ferredoxin] + S-adenosyl-L-homocysteine. Specifically methylates position 2 of adenine 2503 in 23S rRNA and position 2 of adenine 37 in tRNAs. The sequence is that of Probable dual-specificity RNA methyltransferase RlmN from Streptococcus agalactiae serotype Ia (strain ATCC 27591 / A909 / CDC SS700).